Reading from the N-terminus, the 189-residue chain is Ornithine decarboxylase antizyme 2 (189 aa).

S186 carries the post-translational modification Phosphoserine.

Belongs to the ODC antizyme family. In terms of assembly, interacts with ODC1 and thereby sterically blocks ODC homodimerization. Interacts with AZIN2; this interaction disrupts the interaction between the antizyme and ODC1.

Its subcellular location is the nucleus. Ornithine decarboxylase (ODC) antizyme protein that negatively regulates ODC activity and intracellular polyamine biosynthesis and uptake in response to increased intracellular polyamine levels. Binds to ODC monomers, inhibiting the assembly of the functional ODC homodimers. Does not target the ODC monomers for degradation, which allows a protein synthesis-independent restoration of ODC activity. Involved in the translocation of AZIN2 from ER-Golgi intermediate compartment (ERGIC) to the cytosol. The chain is Ornithine decarboxylase antizyme 2 (OAZ2) from Homo sapiens (Human).